The chain runs to 225 residues: Sodium-dependent neutral amino acid transporter SLC6A17 (225 aa).

3 helical membrane passes run 1 to 8 (NVWRFPYL), 16 to 35 (AYLV…LFFL), and 60 to 80 (GIGF…NVII). At 81 to 143 (GWSIFYFFKS…NSISESGGLN (63 aa)) the chain is on the extracellular side. N-linked (GlcNAc...) asparagine glycosylation is present at asparagine 105. The next 3 membrane-spanning stretches (helical) occupy residues 144-162 (WKMT…MAVV), 171-188 (VMYF…CFLV), and 224-225 (IF).

The protein belongs to the sodium:neurotransmitter symporter (SNF) (TC 2.A.22) family.

The protein resides in the cytoplasmic vesicle. Its subcellular location is the secretory vesicle. It localises to the synaptic vesicle membrane. It is found in the postsynapse. The protein localises to the presynapse. It carries out the reaction L-proline(in) + Na(+)(in) = L-proline(out) + Na(+)(out). The enzyme catalyses L-leucine(in) + Na(+)(in) = L-leucine(out) + Na(+)(out). It catalyses the reaction glycine(in) + Na(+)(in) = glycine(out) + Na(+)(out). The catalysed reaction is L-alanine(in) + Na(+)(in) = L-alanine(out) + Na(+)(out). It carries out the reaction L-glutamine(in) + Na(+)(in) = L-glutamine(out) + Na(+)(out). Functionally, synaptic vesicle transporter with apparent selectivity for neutral amino acids. The transport is sodium-coupled but chloride-independent, likely driven by the proton electrochemical gradient generated by vacuolar H(+)-ATPase in an overall electrogenic mechanism. May contribute to the synaptic uptake of neurotransmitter precursors in a process coupled in part to vesicle exocytosis. The chain is Sodium-dependent neutral amino acid transporter SLC6A17 from Bos taurus (Bovine).